A 766-amino-acid chain; its full sequence is MSGIGWQTLSLSLALVLSILNKVAPHACPAQCSCSGSTVDCHGLALRIVPRNIPRNTERLDLNGNNITRITKTDFAGLRHLRILQLMENKISTIERGAFHDLKELERLRLNRNNLQLFPELLFLGTAKLYRLDLSENQIQAIPRKAFRGAVDIKNLQLDYNQISCIEDGAFRALRDLEVLTLNNNNITRLSVASFNHMPKLRTFRLHSNNLYCDCHLAWLSDWLRQRPRVGLYTQCMGPSHLRGHNVAEVQKREFVCSDEEEGHQSFMAPSCSVLHCPIACTCSNNIVDCRGKGLTEIPTNLPETITEIRLEQNSIRVIPPGAFSPYKKLRRLDLSNNQISELAPDAFQGLRSLNSLVLYGNKITELPKSLFEGLFSLQLLLLNANKINCLRVDAFQDLHNLNLLSLYDNKLQTVAKGTFSALRAIQTMHLAQNPFICDCHLKWLADYLHTNPIETSGARCTSPRRLANKRIGQIKSKKFRCSGTEDYRSKLSGDCFADLACPEKCRCEGTTVDCSNQKLNKIPDHIPQYTAELRLNNNEFTVLEATGIFKKLPQLRKINLSNNKITDIEEGAFEGASGVNEILLTSNRLENVQHKMFKGLESLKTLMLRSNRISCVGNDSFTGLGSVRLLSLYDNQITTVAPGAFGTLHSLSTLNLLANPFNCNCHLAWLGEWLRRKRIVTGNPRCQKPYFLKEIPIQDVAIQDFTCDDGNDDNSCSPLSRCPSECTCLDTVVRCSNKGLKVLPKGIPRDVTELYLDGNQFTLVP.

A signal peptide spans 1–30 (MSGIGWQTLSLSLALVLSILNKVAPHACPA). In terms of domain architecture, LRRNT spans 31-55 (QCSCSGSTVDCHGLALRIVPRNIPR). LRR repeat units lie at residues 56–77 (NTER…DFAG), 80–101 (HLRI…AFHD), 104–125 (ELER…LFLG), 128–149 (KLYR…AFRG), 152–173 (DIKN…AFRA), and 176–197 (DLEV…SFNH). Residue Asn66 is glycosylated (N-linked (GlcNAc...) asparagine). Asn186 carries N-linked (GlcNAc...) asparagine glycosylation. Residues 209-259 (NNLYCDCHLAWLSDWLRQRPRVGLYTQCMGPSHLRGHNVAEVQKREFVCSD) enclose the LRRCT 1 domain. The LRRNT 2 domain occupies 268 to 304 (MAPSCSVLHCPIACTCSNNIVDCRGKGLTEIPTNLPE). A disulfide bridge connects residues Cys281 and Cys290. LRR repeat units follow at residues 305–326 (TITE…AFSP), 329–350 (KLRR…AFQG), 353–374 (SLNS…LFEG), 377–398 (SLQL…AFQD), and 401–422 (NLNL…TFSA). An LRRCT 2 domain is found at 434–484 (NPFICDCHLKWLADYLHTNPIETSGARCTSPRRLANKRIGQIKSKKFRCSG). Intrachain disulfides connect Cys438–Cys461, Cys440–Cys482, Cys502–Cys508, and Cys506–Cys515. Positions 493-529 (SGDCFADLACPEKCRCEGTTVDCSNQKLNKIPDHIPQ) constitute an LRRNT 3 domain. 5 LRR repeats span residues 530–551 (YTAE…GIFK), 555–576 (QLRK…AFEG), 579–600 (GVNE…MFKG), 603–624 (SLKT…SFTG), and 627–648 (SVRL…AFGT). The N-linked (GlcNAc...) asparagine glycan is linked to Asn560. Asn619 is a glycosylation site (N-linked (GlcNAc...) asparagine). The region spanning 660 to 710 (NPFNCNCHLAWLGEWLRRKRIVTGNPRCQKPYFLKEIPIQDVAIQDFTCDD) is the LRRCT 3 domain. 4 cysteine pairs are disulfide-bonded: Cys664–Cys687, Cys666–Cys708, Cys723–Cys729, and Cys727–Cys736. An LRRNT 4 domain is found at 714-750 (DNSCSPLSRCPSECTCLDTVVRCSNKGLKVLPKGIPR).

In terms of assembly, homodimer. Binds ROBO1 and ROBO2 with high affinity. Interacts with GREM1.

It is found in the secreted. Thought to act as molecular guidance cue in cellular migration, and function appears to be mediated by interaction with roundabout homolog receptors. During neural development involved in axonal navigation at the ventral midline of the neural tube and projection of axons to different regions. SLIT1 and SLIT2 seem to be essential for midline guidance in the forebrain by acting as repulsive signal preventing inappropriate midline crossing by axons projecting from the olfactory bulb. In spinal cord development may play a role in guiding commissural axons once they reached the floor plate by modulating the response to netrin. In vitro, silences the attractive effect of NTN1 but not its growth-stimulatory effect and silencing requires the formation of a ROBO1-DCC complex. May be implicated in spinal cord midline post-crossing axon repulsion. In vitro, only commissural axons that crossed the midline responded to SLIT2. In the developing visual system appears to function as repellent for retinal ganglion axons by providing a repulsion that directs these axons along their appropriate paths prior to, and after passage through, the optic chiasm. In vitro, collapses and repels retinal ganglion cell growth cones. Seems to play a role in branching and arborization of CNS sensory axons, and in neuronal cell migration. Seems to be involved in regulating leukocyte migration. In Rattus norvegicus (Rat), this protein is Slit homolog 2 protein (Slit2).